A 124-amino-acid chain; its full sequence is CRISPR-associated endoribonuclease Cas2 4 (124 aa).

Residue D40 coordinates Mg(2+).

The protein belongs to the CRISPR-associated endoribonuclease Cas2 protein family. Homodimer, forms a heterotetramer with a Cas1 homodimer. Requires Mg(2+) as cofactor.

Functionally, CRISPR (clustered regularly interspaced short palindromic repeat), is an adaptive immune system that provides protection against mobile genetic elements (viruses, transposable elements and conjugative plasmids). CRISPR clusters contain sequences complementary to antecedent mobile elements and target invading nucleic acids. CRISPR clusters are transcribed and processed into CRISPR RNA (crRNA). Functions as a ssRNA-specific endoribonuclease. Involved in the integration of spacer DNA into the CRISPR cassette. The chain is CRISPR-associated endoribonuclease Cas2 4 from Rhodospirillum rubrum (strain ATCC 11170 / ATH 1.1.1 / DSM 467 / LMG 4362 / NCIMB 8255 / S1).